Reading from the N-terminus, the 59-residue chain is Small ribosomal subunit protein eS17 (59 aa).

The protein belongs to the eukaryotic ribosomal protein eS17 family.

In Halobacterium salinarum (strain ATCC 29341 / DSM 671 / R1), this protein is Small ribosomal subunit protein eS17.